Consider the following 250-residue polypeptide: Agamous-like MADS-box protein AGL8 homolog (250 aa).

In terms of domain architecture, MADS-box spans 3–57 (RGRVQLKRIENKINRQVTFSKRRSGLLKKAHEISVLCDAEVGLIVFSTKGKLFEY). A K-box domain is found at 88–178 (PGSWTLENAK…SKKVKEREKE (91 aa)). Disordered regions lie at residues 162–191 (QEQN…QNHE) and 206–241 (PHLG…TVMP). Residues 171 to 180 (KVKEREKEVE) show a composition bias toward basic and acidic residues. Polar residues-rich tracts occupy residues 181-191 (QQNQWDQQNHE) and 226-240 (GNSS…NTVM).

The protein localises to the nucleus. Probable transcription factor. The protein is Agamous-like MADS-box protein AGL8 homolog (SCM1) of Solanum commersonii (Commerson's wild potato).